The chain runs to 194 residues: Small ribosomal subunit protein uS4c (194 aa).

One can recognise an S4 RNA-binding domain in the interval 82–143 (MRLDNILFRL…KERSKVLIQN (62 aa)).

Belongs to the universal ribosomal protein uS4 family. In terms of assembly, part of the 30S ribosomal subunit. Contacts protein S5. The interaction surface between S4 and S5 is involved in control of translational fidelity.

It is found in the plastid. Its subcellular location is the chloroplast. One of the primary rRNA binding proteins, it binds directly to 16S rRNA where it nucleates assembly of the body of the 30S subunit. Its function is as follows. With S5 and S12 plays an important role in translational accuracy. The chain is Small ribosomal subunit protein uS4c (rps4) from Trimezia steyermarkii (Steyermark's trimezia).